The sequence spans 134 residues: Profilin-2 (134 aa).

A disulfide bond links Cys13 and Cys118. Residues 84 to 100 (AVIRGKKGSGGITIKKT) carry the Involved in PIP2 interaction motif. A Phosphothreonine modification is found at Thr114.

The protein belongs to the profilin family. Occurs in many kinds of cells as a complex with monomeric actin in a 1:1 ratio. Post-translationally, phosphorylated by MAP kinases.

The protein localises to the cytoplasm. Its subcellular location is the cytoskeleton. Its function is as follows. Binds to actin and affects the structure of the cytoskeleton. At high concentrations, profilin prevents the polymerization of actin, whereas it enhances it at low concentrations. The sequence is that of Profilin-2 from Olea europaea (Common olive).